The primary structure comprises 140 residues: Large ribosomal subunit protein uL14 (140 aa).

The protein belongs to the universal ribosomal protein uL14 family. Part of the 50S ribosomal subunit. Forms a cluster with proteins L3 and L24e, part of which may contact the 16S rRNA in 2 intersubunit bridges.

Binds to 23S rRNA. Forms part of two intersubunit bridges in the 70S ribosome. The polypeptide is Large ribosomal subunit protein uL14 (Nitrosopumilus maritimus (strain SCM1)).